Here is a 318-residue protein sequence, read N- to C-terminus: Endochitinase 1 (318 aa).

Positions 1 to 18 (EFTTLFLLFSVLLLSASA) are cleaved as a signal peptide. In terms of domain architecture, Chitin-binding type-1 spans 19 to 60 (EQCGSQAGGALCASGLCCSKFGWCGDTNDYCGPGNCQSQCPG). 7 disulfide bridges follow: Cys-21–Cys-36, Cys-30–Cys-42, Cys-35–Cys-49, Cys-54–Cys-58, Cys-89–Cys-152, Cys-164–Cys-172, and Cys-271–Cys-303. The active-site Proton donor is Glu-134. Positions 312–318 (GLLVDTM) are cleaved as a propeptide — removed in mature form, vacuolar targeting.

It belongs to the glycosyl hydrolase 19 family. Chitinase class I subfamily.

Its subcellular location is the vacuole. It carries out the reaction Random endo-hydrolysis of N-acetyl-beta-D-glucosaminide (1-&gt;4)-beta-linkages in chitin and chitodextrins.. Functionally, defense against chitin-containing fungal pathogens. The sequence is that of Endochitinase 1 (CHTB1) from Solanum tuberosum (Potato).